Consider the following 96-residue polypeptide: 2Fe-2S ferredoxin-5 (96 aa).

Residues 2-96 (PKVIVANINA…GKGDVVIYLP (95 aa)) form the 2Fe-2S ferredoxin-type domain. [2Fe-2S] cluster-binding residues include C36, C42, C45, and C81.

It belongs to the adrenodoxin/putidaredoxin family. It depends on [2Fe-2S] cluster as a cofactor.

Its function is as follows. May be involved in the assembly of iron-sulfur clusters (Isc-Fd). This chain is 2Fe-2S ferredoxin-5 (fdx5), found in Aquifex aeolicus (strain VF5).